The primary structure comprises 602 residues: MDVRRRSEEPVYPSKVFAADEKPLKPHKKQQQQQEDKNTLLIDASDALPLPLYLTTNGLFFTMFFSVMYFLLSRWREKIRNSTPLHVVTLSELGAIVSLIASVIYLLGFFGIGFVQTFVSRGNNDSWDENDEEFLLKEDSRCGPATTLGCAVPAPPARQIAPMAPPQPSMSMVEKPAPLITSASSGEDEEIIKSVVQGKIPSYSLESKLGDCKRAASIRKEVMQRITGKSLEGLPLEGFNYESILGQCCEMPIGYVQIPVGIAGPLLLNGKEFSVPMATTEGCLVASTNRGCKAIYASGGATCILLRDGMTRAPCVRFGTAKRAAELKFFVEDPIKFESLANVFNQSSRFARLQRIQCAIAGKNLYMRLCCSTGDAMGMNMVSKGVQNVLDYLQNEYPDMDVIGISGNFCSDKKPAAVNWIEGRGKSVVCEAIITEEVVKKVLKTEVAALVELNMLKNLTGSAMAGALGGFNAHASNIVSAVFIATGQDPAQNIESSHCITMMEAVNDGKDLHISVTMPSIEVGTVGGGTQLASQSACLNLLGVKGANREAPGSNARLLATVVAGSVLAGELSLMSAISSGQLVNSHMKYNRSTKDVTKASS.

2 helical membrane-spanning segments follow: residues 44–67 (ASDALPLPLYLTTNGLFFTMFFSV) and 95–115 (AIVSLIASVIYLLGFFGIGFV). A linker region spans residues 116-187 (QTFVSRGNND…PLITSASSGE (72 aa)). Asparagine 124 is a glycosylation site (N-linked (GlcNAc...) asparagine). A catalytic region spans residues 188 to 602 (DEEIIKSVVQ…STKDVTKASS (415 aa)). Glutamate 281 serves as the catalytic Charge relay system. N-linked (GlcNAc...) asparagine glycosylation occurs at asparagine 345. The active-site Charge relay system is lysine 413. An N-linked (GlcNAc...) asparagine glycan is attached at asparagine 458. Aspartate 489 functions as the Charge relay system in the catalytic mechanism. Catalysis depends on histidine 587, which acts as the Proton donor. N-linked (GlcNAc...) asparagine glycosylation occurs at asparagine 591.

It belongs to the HMG-CoA reductase family.

Its subcellular location is the endoplasmic reticulum membrane. It catalyses the reaction (R)-mevalonate + 2 NADP(+) + CoA = (3S)-3-hydroxy-3-methylglutaryl-CoA + 2 NADPH + 2 H(+). Its pathway is metabolic intermediate biosynthesis; (R)-mevalonate biosynthesis; (R)-mevalonate from acetyl-CoA: step 3/3. Catalyzes the synthesis of mevalonate. The specific precursor of all isoprenoid compounds present in plants. The polypeptide is 3-hydroxy-3-methylglutaryl-coenzyme A reductase 2 (HMG2) (Solanum lycopersicum (Tomato)).